Reading from the N-terminus, the 333-residue chain is Transcription initiation factor IIB (333 aa).

The TFIIB-type zinc finger occupies 33 to 64 (EVYRCPICGNDRFVYNYERGEIVCIVCGAVVQ). Zn(2+)-binding residues include cysteine 37, cysteine 40, cysteine 56, and cysteine 59. Repeat copies occupy residues 149 to 232 (QELE…LREL) and 243 to 324 (LYIS…ELAK).

This sequence belongs to the TFIIB family.

Functionally, stabilizes TBP binding to an archaeal box-A promoter. Also responsible for recruiting RNA polymerase II to the pre-initiation complex (DNA-TBP-TFIIB). This is Transcription initiation factor IIB from Pyrobaculum islandicum (strain DSM 4184 / JCM 9189 / GEO3).